The primary structure comprises 149 residues: D-aminoacyl-tRNA deacylase (149 aa).

A Gly-cisPro motif, important for rejection of L-amino acids motif is present at residues 137–138 (GP).

This sequence belongs to the DTD family. Homodimer.

It localises to the cytoplasm. The catalysed reaction is glycyl-tRNA(Ala) + H2O = tRNA(Ala) + glycine + H(+). It catalyses the reaction a D-aminoacyl-tRNA + H2O = a tRNA + a D-alpha-amino acid + H(+). Its function is as follows. An aminoacyl-tRNA editing enzyme that deacylates mischarged D-aminoacyl-tRNAs. Also deacylates mischarged glycyl-tRNA(Ala), protecting cells against glycine mischarging by AlaRS. Acts via tRNA-based rather than protein-based catalysis; rejects L-amino acids rather than detecting D-amino acids in the active site. By recycling D-aminoacyl-tRNA to D-amino acids and free tRNA molecules, this enzyme counteracts the toxicity associated with the formation of D-aminoacyl-tRNA entities in vivo and helps enforce protein L-homochirality. In Desulfotalea psychrophila (strain LSv54 / DSM 12343), this protein is D-aminoacyl-tRNA deacylase.